A 393-amino-acid polypeptide reads, in one-letter code: NAD(P)H-quinone oxidoreductase subunit H, chloroplastic (393 aa).

Belongs to the complex I 49 kDa subunit family. In terms of assembly, NDH is composed of at least 16 different subunits, 5 of which are encoded in the nucleus.

It is found in the plastid. Its subcellular location is the chloroplast thylakoid membrane. The enzyme catalyses a plastoquinone + NADH + (n+1) H(+)(in) = a plastoquinol + NAD(+) + n H(+)(out). It carries out the reaction a plastoquinone + NADPH + (n+1) H(+)(in) = a plastoquinol + NADP(+) + n H(+)(out). In terms of biological role, NDH shuttles electrons from NAD(P)H:plastoquinone, via FMN and iron-sulfur (Fe-S) centers, to quinones in the photosynthetic chain and possibly in a chloroplast respiratory chain. The immediate electron acceptor for the enzyme in this species is believed to be plastoquinone. Couples the redox reaction to proton translocation, and thus conserves the redox energy in a proton gradient. This is NAD(P)H-quinone oxidoreductase subunit H, chloroplastic from Ceratophyllum demersum (Rigid hornwort).